The chain runs to 251 residues: Segregation and condensation protein A (251 aa).

It belongs to the ScpA family. As to quaternary structure, component of a cohesin-like complex composed of ScpA, ScpB and the Smc homodimer, in which ScpA and ScpB bind to the head domain of Smc. The presence of the three proteins is required for the association of the complex with DNA.

Its subcellular location is the cytoplasm. Functionally, participates in chromosomal partition during cell division. May act via the formation of a condensin-like complex containing Smc and ScpB that pull DNA away from mid-cell into both cell halves. This chain is Segregation and condensation protein A, found in Bacillus licheniformis (strain ATCC 14580 / DSM 13 / JCM 2505 / CCUG 7422 / NBRC 12200 / NCIMB 9375 / NCTC 10341 / NRRL NRS-1264 / Gibson 46).